Here is a 159-residue protein sequence, read N- to C-terminus: NADH-quinone oxidoreductase subunit B (159 aa).

[4Fe-4S] cluster-binding residues include Cys-37, Cys-38, Cys-102, and Cys-132.

The protein belongs to the complex I 20 kDa subunit family. As to quaternary structure, NDH-1 is composed of 14 different subunits. Subunits NuoB, C, D, E, F, and G constitute the peripheral sector of the complex. The cofactor is [4Fe-4S] cluster.

The protein localises to the cell inner membrane. The catalysed reaction is a quinone + NADH + 5 H(+)(in) = a quinol + NAD(+) + 4 H(+)(out). NDH-1 shuttles electrons from NADH, via FMN and iron-sulfur (Fe-S) centers, to quinones in the respiratory chain. Couples the redox reaction to proton translocation (for every two electrons transferred, four hydrogen ions are translocated across the cytoplasmic membrane), and thus conserves the redox energy in a proton gradient. The protein is NADH-quinone oxidoreductase subunit B of Paraburkholderia phymatum (strain DSM 17167 / CIP 108236 / LMG 21445 / STM815) (Burkholderia phymatum).